The primary structure comprises 214 residues: A-type ATP synthase subunit D (214 aa).

It belongs to the V-ATPase D subunit family. In terms of assembly, has multiple subunits with at least A(3), B(3), C, D, E, F, H, I and proteolipid K(x).

Its subcellular location is the cell membrane. Component of the A-type ATP synthase that produces ATP from ADP in the presence of a proton gradient across the membrane. This Pyrococcus furiosus (strain ATCC 43587 / DSM 3638 / JCM 8422 / Vc1) protein is A-type ATP synthase subunit D.